The primary structure comprises 206 residues: Large ribosomal subunit protein bL25 (206 aa).

Belongs to the bacterial ribosomal protein bL25 family. CTC subfamily. In terms of assembly, part of the 50S ribosomal subunit; part of the 5S rRNA/L5/L18/L25 subcomplex. Contacts the 5S rRNA. Binds to the 5S rRNA independently of L5 and L18.

In terms of biological role, this is one of the proteins that binds to the 5S RNA in the ribosome where it forms part of the central protuberance. This Bartonella henselae (strain ATCC 49882 / DSM 28221 / CCUG 30454 / Houston 1) (Rochalimaea henselae) protein is Large ribosomal subunit protein bL25.